The sequence spans 258 residues: Phosphate import ATP-binding protein PstB (258 aa).

The ABC transporter domain occupies 12–253 (LEVKNLNFYY…PARKETEDYI (242 aa)). Position 44–51 (44–51 (GPSGCGKS)) interacts with ATP.

Belongs to the ABC transporter superfamily. Phosphate importer (TC 3.A.1.7) family. As to quaternary structure, the complex is composed of two ATP-binding proteins (PstB), two transmembrane proteins (PstC and PstA) and a solute-binding protein (PstS).

The protein resides in the cell inner membrane. It carries out the reaction phosphate(out) + ATP + H2O = ADP + 2 phosphate(in) + H(+). Part of the ABC transporter complex PstSACB involved in phosphate import. Responsible for energy coupling to the transport system. The protein is Phosphate import ATP-binding protein PstB of Bordetella pertussis (strain Tohama I / ATCC BAA-589 / NCTC 13251).